A 120-amino-acid chain; its full sequence is uncharacterized protein (120 aa).

A helical membrane pass occupies residues 19-41 (YPELFITWCVMTYTFGVAGYMLG). Residues 57-78 (SKNAHPWEDTKSSSGKSDESLD) form a disordered region. Residues 61-75 (HPWEDTKSSSGKSDE) show a composition bias toward basic and acidic residues.

Its subcellular location is the membrane. This is an uncharacterized protein from Schizosaccharomyces pombe (strain 972 / ATCC 24843) (Fission yeast).